The primary structure comprises 218 residues: Small ribosomal subunit protein uS3 (218 aa).

The region spanning 38 to 106 is the KH type-2 domain; it reads IREYISKRLS…RVHINILEIK (69 aa).

Belongs to the universal ribosomal protein uS3 family. As to quaternary structure, part of the 30S ribosomal subunit. Forms a tight complex with proteins S10 and S14.

Functionally, binds the lower part of the 30S subunit head. Binds mRNA in the 70S ribosome, positioning it for translation. This Bacillus subtilis (strain 168) protein is Small ribosomal subunit protein uS3.